The chain runs to 245 residues: tRNA1(Val) (adenine(37)-N6)-methyltransferase (245 aa).

The protein belongs to the methyltransferase superfamily. tRNA (adenine-N(6)-)-methyltransferase family.

It localises to the cytoplasm. The enzyme catalyses adenosine(37) in tRNA1(Val) + S-adenosyl-L-methionine = N(6)-methyladenosine(37) in tRNA1(Val) + S-adenosyl-L-homocysteine + H(+). Functionally, specifically methylates the adenine in position 37 of tRNA(1)(Val) (anticodon cmo5UAC). The polypeptide is tRNA1(Val) (adenine(37)-N6)-methyltransferase (Shigella dysenteriae serotype 1 (strain Sd197)).